A 114-amino-acid polypeptide reads, in one-letter code: Astacin-like metalloprotease toxin 4 (114 aa).

Residues 1 to 114 enclose the Peptidase M12A domain; the sequence is RETNENDYVD…GLLCLFKGSV (114 aa). C17 and C38 are oxidised to a cystine. Residue H46 coordinates Zn(2+). E47 is an active-site residue. Residues H50 and H56 each contribute to the Zn(2+) site. A glycan (N-linked (GlcNAc...) asparagine) is linked at N88.

In terms of assembly, monomer. Zn(2+) serves as cofactor. Expressed by the venom gland.

The protein localises to the secreted. Inhibited by 1,10-phenanthroline. Functionally, zinc metalloprotease. Provoques deadhesion of endothelial cells from cell cultures, and also degradation of fibronectin, fibrinogen and gelatin in vitro. Its role in the venom is not fully understood but it might act as a spreading factor that facilitates diffusion of other venom toxins. Alternatively, it might be involved in the proteolytic processing of other venom toxins or it might play a role in extra-oral digestion of prey. The chain is Astacin-like metalloprotease toxin 4 from Loxosceles laeta (South American recluse spider).